Reading from the N-terminus, the 102-residue chain is Integration host factor subunit alpha (102 aa).

The tract at residues 49-71 (FGNFQLRTKPQRPGRNPKTGEEI) is disordered.

Belongs to the bacterial histone-like protein family. In terms of assembly, heterodimer of an alpha and a beta chain.

Its function is as follows. This protein is one of the two subunits of integration host factor, a specific DNA-binding protein that functions in genetic recombination as well as in transcriptional and translational control. In Nitrosomonas eutropha (strain DSM 101675 / C91 / Nm57), this protein is Integration host factor subunit alpha.